Consider the following 328-residue polypeptide: Sulfate adenylyltransferase subunit 2 (328 aa).

The tract at residues 309-328 is disordered; that stretch reads RAIDKDQTASMEKKKQEGYF.

It belongs to the PAPS reductase family. CysD subfamily. In terms of assembly, heterodimer composed of CysD, the smaller subunit, and CysN.

The catalysed reaction is sulfate + ATP + H(+) = adenosine 5'-phosphosulfate + diphosphate. It functions in the pathway sulfur metabolism; hydrogen sulfide biosynthesis; sulfite from sulfate: step 1/3. Its function is as follows. With CysN forms the ATP sulfurylase (ATPS) that catalyzes the adenylation of sulfate producing adenosine 5'-phosphosulfate (APS) and diphosphate, the first enzymatic step in sulfur assimilation pathway. APS synthesis involves the formation of a high-energy phosphoric-sulfuric acid anhydride bond driven by GTP hydrolysis by CysN coupled to ATP hydrolysis by CysD. This Hyphomonas neptunium (strain ATCC 15444) protein is Sulfate adenylyltransferase subunit 2.